Here is a 527-residue protein sequence, read N- to C-terminus: T-complex protein 1 subunit delta (527 aa).

This sequence belongs to the TCP-1 chaperonin family. In terms of assembly, heterooligomeric complex of about 850 to 900 kDa that forms two stacked rings, 12 to 16 nm in diameter.

It is found in the cytoplasm. Molecular chaperone; assists the folding of proteins upon ATP hydrolysis. Known to play a role, in vitro, in the folding of actin and tubulin. The protein is T-complex protein 1 subunit delta (cct4) of Schizosaccharomyces pombe (strain 972 / ATCC 24843) (Fission yeast).